The chain runs to 144 residues: Maximins 10/H15 (144 aa).

A signal peptide spans 1 to 18; it reads MNFKYIVAVSFLIASAYA. The propeptide occupies 19 to 43; sequence RSVQNDEQSLSQRDVLEEESLREIR. Ser-70 carries the post-translational modification Serine amide. Residues 74–123 constitute a propeptide that is removed on maturation; the sequence is TAEDHEVMKRLEAVMRDLDSLDYPEEATERETRGFNQEEIANLFTKKEKR. Position 143 is a leucine amide (Leu-143).

It belongs to the bombinin family. In terms of tissue distribution, expressed by the skin glands.

Its subcellular location is the secreted. Maximin-10 shows antimicrobial activity against bacteria and against the fungus C.albicans. It has little hemolytic activity. Functionally, maximin-H15 shows antimicrobial activity against bacteria and against the fungus C.albicans. Shows strong hemolytic activity. The protein is Maximins 10/H15 of Bombina maxima (Giant fire-bellied toad).